Here is a 216-residue protein sequence, read N- to C-terminus: Adenylate kinase (216 aa).

ATP is bound at residue 10–15 (GAGKGT). The NMP stretch occupies residues 30–59 (STGDMFRAAMKNETALGLEAKSYIDKGELV). AMP contacts are provided by residues T31, R36, 57-59 (ELV), 85-88 (GFPR), and Q92. The LID stretch occupies residues 126 to 164 (GRFICRTCGATYHKLFNPPKVEGTCDRCGGHEFYQREDD). R127 provides a ligand contact to ATP. Zn(2+) contacts are provided by C130 and C133. 136–137 (TY) is a binding site for ATP. Zn(2+) is bound by residues C150 and C153. R161 and R172 together coordinate AMP. R200 provides a ligand contact to ATP.

The protein belongs to the adenylate kinase family. Monomer.

The protein resides in the cytoplasm. The catalysed reaction is AMP + ATP = 2 ADP. It participates in purine metabolism; AMP biosynthesis via salvage pathway; AMP from ADP: step 1/1. Its function is as follows. Catalyzes the reversible transfer of the terminal phosphate group between ATP and AMP. Plays an important role in cellular energy homeostasis and in adenine nucleotide metabolism. This is Adenylate kinase from Enterococcus faecalis (strain ATCC 700802 / V583).